Reading from the N-terminus, the 799-residue chain is Signal transducer and activator of transcription 5A (799 aa).

Tyr90 bears the Phosphotyrosine mark. Ser128 carries the post-translational modification Phosphoserine. The region spanning 589–686 (WNDGAILGFV…EVFSKYYTPV (98 aa)) is the SH2 domain. Tyr682 carries the post-translational modification Phosphotyrosine. A Phosphotyrosine; by JAK2 modification is found at Tyr699. The segment at 778 to 799 (DSLDPRLSPPAGLFASTRGSLS) is disordered. Ser785 bears the Phosphoserine mark.

It belongs to the transcription factor STAT family. As to quaternary structure, forms a homodimer or a heterodimer with a related family member. Binds NR3C1. Interacts with NCOA1 and SOCS7. Interacts with ERBB4. Interacts with EBF4. Interacts with CD69. Post-translationally, ISGylated. In terms of processing, tyrosine phosphorylated in response to KITLG/SCF, IL2, IL3, IL7, IL15, CSF2/GMCSF, GH1, PRL, EPO and THPO. Activated KIT promotes phosphorylation on tyrosine residues and subsequent translocation to the nucleus. Tyrosine phosphorylated in response to constitutively activated FGFR1, FGFR2, FGFR3 and FGFR4. Tyrosine phosphorylation is required for DNA-binding activity and dimerization. Serine phosphorylation is also required for maximal transcriptional activity. Tyrosine phosphorylated in response to signaling via activated FLT3; wild-type FLT3 results in much weaker phosphorylation than constitutively activated mutant FLT3. Alternatively, can be phosphorylated by JAK2 at Tyr-699.

It localises to the cytoplasm. Its subcellular location is the nucleus. Carries out a dual function: signal transduction and activation of transcription. Mediates cellular responses to the cytokine KITLG/SCF and other growth factors. May mediate cellular responses to activated FGFR1, FGFR2, FGFR3 and FGFR4. Binds to the GAS element and activates PRL-induced transcription. Regulates the expression of milk proteins during lactation. The chain is Signal transducer and activator of transcription 5A (STAT5A) from Sus scrofa (Pig).